The primary structure comprises 192 residues: Peptidyl-tRNA hydrolase (192 aa).

Position 17 (Tyr17) interacts with tRNA. Residue His22 is the Proton acceptor of the active site. Residues Phe68, Asn70, and Asn116 each coordinate tRNA.

It belongs to the PTH family. Monomer.

Its subcellular location is the cytoplasm. It carries out the reaction an N-acyl-L-alpha-aminoacyl-tRNA + H2O = an N-acyl-L-amino acid + a tRNA + H(+). Its function is as follows. Hydrolyzes ribosome-free peptidyl-tRNAs (with 1 or more amino acids incorporated), which drop off the ribosome during protein synthesis, or as a result of ribosome stalling. In terms of biological role, catalyzes the release of premature peptidyl moieties from peptidyl-tRNA molecules trapped in stalled 50S ribosomal subunits, and thus maintains levels of free tRNAs and 50S ribosomes. The sequence is that of Peptidyl-tRNA hydrolase from Xylella fastidiosa (strain Temecula1 / ATCC 700964).